Reading from the N-terminus, the 430-residue chain is Adenylosuccinate synthetase (430 aa).

Residues 12–18 and 40–42 each bind GTP; these read GDEGKGK and GHT. Residue aspartate 13 is the Proton acceptor of the active site. Residues aspartate 13 and glycine 40 each contribute to the Mg(2+) site. IMP is bound by residues 13–16, 38–41, threonine 128, arginine 142, glutamine 223, threonine 238, and arginine 302; these read DEGK and NAGH. Histidine 41 functions as the Proton donor in the catalytic mechanism. 298 to 304 contacts substrate; sequence TTTGRPR. Residues arginine 304, 330 to 332, and 412 to 414 each bind GTP; these read SID and SVG.

The protein belongs to the adenylosuccinate synthetase family. Homodimer. Mg(2+) serves as cofactor.

It is found in the cytoplasm. It catalyses the reaction IMP + L-aspartate + GTP = N(6)-(1,2-dicarboxyethyl)-AMP + GDP + phosphate + 2 H(+). Its pathway is purine metabolism; AMP biosynthesis via de novo pathway; AMP from IMP: step 1/2. Its function is as follows. Plays an important role in the de novo pathway of purine nucleotide biosynthesis. Catalyzes the first committed step in the biosynthesis of AMP from IMP. In Streptococcus pyogenes serotype M6 (strain ATCC BAA-946 / MGAS10394), this protein is Adenylosuccinate synthetase.